Here is a 109-residue protein sequence, read N- to C-terminus: Phycoerythrin alpha-2 subunit (109 aa).

(2R,3E)-phycoerythrobilin contacts are provided by Asp-52, Ser-53, Glu-63, Arg-64, Cys-67, Thr-72, Lys-74, Ala-75, and Lys-84.

It belongs to the phycoerythrin family. As to quaternary structure, heterotetramer of 2 different alpha chains and 2 identical beta chains which form 2 alpha-beta heterodimers within the heterotetramer. The two alpha-beta heterodimers are rotated to an open configuration in contrast to the closed configuration found in other cryptophyte species due to the insertion of a single amino acid, Asp-65, in a conserved region of the alpha chain. In the open form, the central chromophores are not in physical contact but are separated by a water-filled channel. In terms of processing, contains three phycoerythrobilin chromophores with binding mediated by both the alpha and beta subunits.

It localises to the plastid. The protein localises to the chloroplast thylakoid membrane. Light-harvesting photosynthetic tetrapyrrole chromophore-protein from the phycobiliprotein complex. The protein is Phycoerythrin alpha-2 subunit of Hemiselmis andersenii (Cryptophyte alga).